The chain runs to 209 residues: Redox-sensing transcriptional repressor Rex (209 aa).

Positions 16 to 55 (LYYRFIQNLSLSGKQRVSSAELSEAVKVDSATIRRDFSYF) form a DNA-binding region, H-T-H motif. Position 90–95 (90–95 (GVGNLG)) interacts with NAD(+).

The protein belongs to the transcriptional regulatory Rex family. As to quaternary structure, homodimer.

The protein localises to the cytoplasm. Functionally, modulates transcription in response to changes in cellular NADH/NAD(+) redox state. This is Redox-sensing transcriptional repressor Rex from Bacillus mycoides (strain KBAB4) (Bacillus weihenstephanensis).